Here is a 265-residue protein sequence, read N- to C-terminus: Deoxyguanosine kinase, mitochondrial (265 aa).

32-40 serves as a coordination point for ATP; it reads GNIAVGKST. Residues glutamate 57, tyrosine 88, glutamine 99, and arginine 106 each contribute to the substrate site. Glutamate 129 functions as the Proton acceptor in the catalytic mechanism. Substrate contacts are provided by arginine 130 and aspartate 135. An ATP-binding site is contributed by 190–194; sequence RLQRR. Glutamate 199 serves as a coordination point for substrate. 242-244 contacts ATP; the sequence is EDF.

Belongs to the DCK/DGK family. As to quaternary structure, homodimer.

The protein resides in the mitochondrion. The catalysed reaction is 2'-deoxyguanosine + ATP = dGMP + ADP + H(+). Its function is as follows. Phosphorylates deoxyguanosine in the mitochondrial matrix with high efficiency but shows very low activity against other deoxynucleosides. The polypeptide is Deoxyguanosine kinase, mitochondrial (Xenopus laevis (African clawed frog)).